The following is a 326-amino-acid chain: Protein farnesyltransferase/geranylgeranyltransferase type-1 subunit alpha (326 aa).

PFTA repeat units lie at residues 55–89 (RSPRALRLTEETLLLNSGNYTVWHFRRLVLEALNH), 90–124 (DLFEELEFIERIAEDNSKNYQLWHHRRWVAEKLGP), 126–160 (VAGRELEFTRRVLSLDAKHYHAWSHRQWTLRALGG), 161–194 (WEDELDYCHELLEADVFNNSAWNQRYYVITQSPL), and 201–235 (MRESEVSYTIKAILTNPANESSWRYLKALYKDDKE).

This sequence belongs to the protein prenyltransferase subunit alpha family. Heterodimer of an alpha and a beta subunit. Requires Mg(2+) as cofactor.

It carries out the reaction L-cysteinyl-[protein] + (2E,6E)-farnesyl diphosphate = S-(2E,6E)-farnesyl-L-cysteinyl-[protein] + diphosphate. The catalysed reaction is geranylgeranyl diphosphate + L-cysteinyl-[protein] = S-geranylgeranyl-L-cysteinyl-[protein] + diphosphate. Essential subunit of both the farnesyltransferase and the geranylgeranyltransferase complex. Contributes to the transfer of a farnesyl or geranylgeranyl moiety from farnesyl or geranylgeranyl diphosphate to a cysteine at the fourth position from the C-terminus of several proteins having the C-terminal sequence Cys-aliphatic-aliphatic-X. The protein is Protein farnesyltransferase/geranylgeranyltransferase type-1 subunit alpha (FTA) of Arabidopsis thaliana (Mouse-ear cress).